We begin with the raw amino-acid sequence, 347 residues long: MNPLVFTVIMSTVMLGTAIVATSSHWLMAWIGFEMNMLAVIPILMKKYNPRSMEASTKYFLTQATASMLLMLAVTMNLVYSGQWSVTKPLSPTASTIMTLAMAMKLGLSPFHFWVPEVAQGISLPSGLILLTWQKLAPMSILYQISSTINLDLLMTLSILSIGIGGWGGLNQTQLRKIMAYSSIAHMGWMTTILAYNPTMTLLNLAIYILLTTTTFMMFMLSSTTTTLSLSHTWNKMPLLTTAILLTMLSLGGLPPLSGFMPKWMIIQELTKNDNVILPTMMAVMALLNLYFYMRLTYSTSLTMFPSTNNMKMKWQFNYAKSTTHLSPLIILSTLILPLSPMLALLE.

Transmembrane regions (helical) follow at residues 1–21, 25–45, 59–79, 111–131, 149–169, 178–198, 201–221, 237–257, 276–296, and 326–346; these read MNPL…AIVA, HWLM…PILM, YFLT…MNLV, FHFW…LILL, INLD…GWGG, IMAY…AYNP, TLLN…MFML, MPLL…LPPL, VILP…YMRL, and LSPL…LALL.

Belongs to the complex I subunit 2 family. As to quaternary structure, core subunit of respiratory chain NADH dehydrogenase (Complex I) which is composed of 45 different subunits. Interacts with TMEM242.

It is found in the mitochondrion inner membrane. It catalyses the reaction a ubiquinone + NADH + 5 H(+)(in) = a ubiquinol + NAD(+) + 4 H(+)(out). Core subunit of the mitochondrial membrane respiratory chain NADH dehydrogenase (Complex I) which catalyzes electron transfer from NADH through the respiratory chain, using ubiquinone as an electron acceptor. Essential for the catalytic activity and assembly of complex I. The protein is NADH-ubiquinone oxidoreductase chain 2 of Pteropus pumilus (Little golden-mantled flying fox).